The primary structure comprises 229 residues: Enolase-phosphatase E1 (229 aa).

The segment covering 208 to 218 has biased composition (polar residues); the sequence is DTQSTHRQVSS. Residues 208 to 229 form a disordered region; sequence DTQSTHRQVSSFDDIHPEQIPT. Positions 220–229 are enriched in basic and acidic residues; sequence DDIHPEQIPT.

The protein belongs to the HAD-like hydrolase superfamily. MasA/MtnC family. As to quaternary structure, monomer. Requires Mg(2+) as cofactor.

The catalysed reaction is 5-methylsulfanyl-2,3-dioxopentyl phosphate + H2O = 1,2-dihydroxy-5-(methylsulfanyl)pent-1-en-3-one + phosphate. It participates in amino-acid biosynthesis; L-methionine biosynthesis via salvage pathway; L-methionine from S-methyl-5-thio-alpha-D-ribose 1-phosphate: step 3/6. Its pathway is amino-acid biosynthesis; L-methionine biosynthesis via salvage pathway; L-methionine from S-methyl-5-thio-alpha-D-ribose 1-phosphate: step 4/6. In terms of biological role, bifunctional enzyme that catalyzes the enolization of 2,3-diketo-5-methylthiopentyl-1-phosphate (DK-MTP-1-P) into the intermediate 2-hydroxy-3-keto-5-methylthiopentenyl-1-phosphate (HK-MTPenyl-1-P), which is then dephosphorylated to form the acireductone 1,2-dihydroxy-3-keto-5-methylthiopentene (DHK-MTPene). The polypeptide is Enolase-phosphatase E1 (Cronobacter sakazakii (strain ATCC BAA-894) (Enterobacter sakazakii)).